We begin with the raw amino-acid sequence, 2136 residues long: U5 small nuclear ribonucleoprotein 200 kDa helicase (2136 aa).

Ser17 and Ser26 each carry phosphoserine. A Glycyl lysine isopeptide (Lys-Gly) (interchain with G-Cter in SUMO2) cross-link involves residue Lys46. A disordered region spans residues 50–80; sequence TRMGDKAQRTKPQMQEERRAKRRKRDEDRHD. Residues 54–84 adopt a coiled-coil conformation; it reads DKAQRTKPQMQEERRAKRRKRDEDRHDINKM. Phosphoserine is present on Ser225. The residue at position 389 (Thr389) is a Phosphothreonine. The interval 395–2129 is interaction with C9orf78 and WBP4; it reads DLDQGGEALA…YKFSVDVKEA (1735 aa). Positions 490–673 constitute a Helicase ATP-binding 1 domain; sequence RAALETDENL…FLRVDPAKGL (184 aa). 503–510 contributes to the ATP binding site; sequence APTGAGKT. Positions 615–618 match the DEIH box motif; that stretch reads DEIH. Positions 684 to 921 constitute a Helicase C-terminal 1 domain; that stretch reads PLEQTYVGIT…NAKDAVNWLG (238 aa). Tyr709 carries the phosphotyrosine modification. Lys971 is subject to N6-acetyllysine. One can recognise an SEC63 1 domain in the interval 981–1286; sequence VTELGRIASH…SCETQLPVSF (306 aa). The interaction with TSSC4 stretch occupies residues 1282 to 2136; sequence LPVSFRHLIL…KEAETDSDSD (855 aa). The 176-residue stretch at 1337–1512 folds into the Helicase ATP-binding 2 domain; the sequence is NTVYNSDDNV…WLGCSATSTF (176 aa). 1350–1357 serves as a coordination point for ATP; that stretch reads APTGSGKT. Phosphothreonine is present on Thr1428. The DEVH box motif lies at 1454–1457; the sequence is DEVH. A Helicase C-terminal 2 domain is found at 1545 to 1753; it reads PVYHAITKHS…TIENKQDAVD (209 aa). Position 1765 is a phosphothreonine (Thr1765). One can recognise an SEC63 2 domain in the interval 1812–2124; the sequence is PLNLGMIAAY…GCDQEYKFSV (313 aa). Position 2002 is a phosphoserine (Ser2002). Thr2131 is modified (phosphothreonine). A phosphoserine mark is found at Ser2133 and Ser2135.

This sequence belongs to the helicase family. SKI2 subfamily. Component of a core complex containing at least PRPF8, SNRNP200, EFTUD2 and SNRNP40. Component of the U5 snRNP and U4/U6-U5 tri-snRNP complexes, building blocks of the spliceosome. Component of the U4/U6-U5 tri-snRNP complex composed of the U4, U6 and U5 snRNAs and at least PRPF3, PRPF4, PRPF6, PRPF8, PRPF31, SNRNP200, TXNL4A, SNRNP40, DDX23, CD2BP2, PPIH, SNU13, EFTUD2, SART1 and USP39. Component of precatalytic, catalytic and postcatalytic spliceosomal complexes. Component of the minor spliceosome, which splices U12-type introns. Interacts with C9orf78; the interaction is direct and mutually exclusive with its interaction with WBP4. Interacts with WBP4; the interaction is mutually exclusive with its interaction with C9orf78. Interacts with PRPF8. Interacts with TSSC4; the interaction is direct, excludes recruitment of C9ORF78 and WBP4 to SNRNP200 and negatively regulates its RNA helicase activity. In terms of tissue distribution, widely expressed.

The protein localises to the nucleus. It catalyses the reaction ATP + H2O = ADP + phosphate + H(+). Its function is as follows. Catalyzes the ATP-dependent unwinding of U4/U6 RNA duplices, an essential step in the assembly of a catalytically active spliceosome. Plays a role in pre-mRNA splicing as a core component of precatalytic, catalytic and postcatalytic spliceosomal complexes. As a component of the minor spliceosome, involved in the splicing of U12-type introns in pre-mRNAs. Involved in spliceosome assembly, activation and disassembly. Mediates changes in the dynamic network of RNA-RNA interactions in the spliceosome. This chain is U5 small nuclear ribonucleoprotein 200 kDa helicase (SNRNP200), found in Homo sapiens (Human).